The following is a 167-amino-acid chain: UPF0179 protein Pisl_0688 (167 aa).

This sequence belongs to the UPF0179 family.

The chain is UPF0179 protein Pisl_0688 from Pyrobaculum islandicum (strain DSM 4184 / JCM 9189 / GEO3).